Here is a 269-residue protein sequence, read N- to C-terminus: Cytochrome c oxidase subunit 3 (269 aa).

Helical transmembrane passes span 21 to 41 (PWPM…GLTM), 45 to 65 (IGNM…SVFW), 90 to 110 (GFLL…WAYF), 138 to 160 (PLLN…HALI), 167 to 187 (ALSG…CQYI), 205 to 225 (FYAG…MLII), and 247 to 267 (ILYC…FYWW).

Belongs to the cytochrome c oxidase subunit 3 family. As to quaternary structure, component of the cytochrome c oxidase (complex IV, CIV), a multisubunit enzyme composed of a catalytic core of 3 subunits and several supernumerary subunits. The complex exists as a monomer or a dimer and forms supercomplexes (SCs) in the inner mitochondrial membrane with ubiquinol-cytochrome c oxidoreductase (cytochrome b-c1 complex, complex III, CIII).

It is found in the mitochondrion inner membrane. The catalysed reaction is 4 Fe(II)-[cytochrome c] + O2 + 8 H(+)(in) = 4 Fe(III)-[cytochrome c] + 2 H2O + 4 H(+)(out). In terms of biological role, component of the cytochrome c oxidase, the last enzyme in the mitochondrial electron transport chain which drives oxidative phosphorylation. The respiratory chain contains 3 multisubunit complexes succinate dehydrogenase (complex II, CII), ubiquinol-cytochrome c oxidoreductase (cytochrome b-c1 complex, complex III, CIII) and cytochrome c oxidase (complex IV, CIV), that cooperate to transfer electrons derived from NADH and succinate to molecular oxygen, creating an electrochemical gradient over the inner membrane that drives transmembrane transport and the ATP synthase. Cytochrome c oxidase is the component of the respiratory chain that catalyzes the reduction of oxygen to water. Electrons originating from reduced cytochrome c in the intermembrane space (IMS) are transferred via the dinuclear copper A center (CU(A)) of subunit 2 and heme A of subunit 1 to the active site in subunit 1, a binuclear center (BNC) formed by heme A3 and copper B (CU(B)). The BNC reduces molecular oxygen to 2 water molecules using 4 electrons from cytochrome c in the IMS and 4 protons from the mitochondrial matrix. The protein is Cytochrome c oxidase subunit 3 (COX3) of Candida glabrata (strain ATCC 2001 / BCRC 20586 / JCM 3761 / NBRC 0622 / NRRL Y-65 / CBS 138) (Yeast).